The chain runs to 87 residues: MEKAVKQEIMEKYARHEGDTGSPEVQIALLTTRINHLNEHLKIHKKDHHSRRGLLMMVGKRRGLLNYLIKQDIERYRAIIKALNLRK.

This sequence belongs to the universal ribosomal protein uS15 family. As to quaternary structure, part of the 30S ribosomal subunit. Forms a bridge to the 50S subunit in the 70S ribosome, contacting the 23S rRNA.

In terms of biological role, one of the primary rRNA binding proteins, it binds directly to 16S rRNA where it helps nucleate assembly of the platform of the 30S subunit by binding and bridging several RNA helices of the 16S rRNA. Functionally, forms an intersubunit bridge (bridge B4) with the 23S rRNA of the 50S subunit in the ribosome. The protein is Small ribosomal subunit protein uS15 of Clostridium kluyveri (strain NBRC 12016).